The chain runs to 339 residues: Protein RecA (339 aa).

74-81 contacts ATP; sequence GPESSGKT.

This sequence belongs to the RecA family.

It is found in the cytoplasm. Can catalyze the hydrolysis of ATP in the presence of single-stranded DNA, the ATP-dependent uptake of single-stranded DNA by duplex DNA, and the ATP-dependent hybridization of homologous single-stranded DNAs. It interacts with LexA causing its activation and leading to its autocatalytic cleavage. The chain is Protein RecA from Phytoplasma mali (strain AT).